Consider the following 258-residue polypeptide: Imidazole glycerol phosphate synthase subunit HisF (258 aa).

Catalysis depends on residues Asp-11 and Asp-130.

Belongs to the HisA/HisF family. In terms of assembly, heterodimer of HisH and HisF.

The protein resides in the cytoplasm. The catalysed reaction is 5-[(5-phospho-1-deoxy-D-ribulos-1-ylimino)methylamino]-1-(5-phospho-beta-D-ribosyl)imidazole-4-carboxamide + L-glutamine = D-erythro-1-(imidazol-4-yl)glycerol 3-phosphate + 5-amino-1-(5-phospho-beta-D-ribosyl)imidazole-4-carboxamide + L-glutamate + H(+). It functions in the pathway amino-acid biosynthesis; L-histidine biosynthesis; L-histidine from 5-phospho-alpha-D-ribose 1-diphosphate: step 5/9. Functionally, IGPS catalyzes the conversion of PRFAR and glutamine to IGP, AICAR and glutamate. The HisF subunit catalyzes the cyclization activity that produces IGP and AICAR from PRFAR using the ammonia provided by the HisH subunit. The protein is Imidazole glycerol phosphate synthase subunit HisF of Bradyrhizobium sp. (strain ORS 278).